Here is an 80-residue protein sequence, read N- to C-terminus: Acyl carrier protein (80 aa).

In terms of domain architecture, Carrier spans 4–79; that stretch reads DEIFSKVRSI…DVVNFIKKRK (76 aa). At Ser39 the chain carries O-(pantetheine 4'-phosphoryl)serine.

It belongs to the acyl carrier protein (ACP) family. Post-translationally, 4'-phosphopantetheine is transferred from CoA to a specific serine of apo-ACP by AcpS. This modification is essential for activity because fatty acids are bound in thioester linkage to the sulfhydryl of the prosthetic group.

The protein resides in the cytoplasm. Its pathway is lipid metabolism; fatty acid biosynthesis. Functionally, carrier of the growing fatty acid chain in fatty acid biosynthesis. In Borreliella burgdorferi (strain ATCC 35210 / DSM 4680 / CIP 102532 / B31) (Borrelia burgdorferi), this protein is Acyl carrier protein.